A 1071-amino-acid polypeptide reads, in one-letter code: Exportin-1 (1071 aa).

The interval 1–679 is necessary for HTLV-1 Rex-mediated mRNA export; the sequence is MPAIMTMLAD…QQATKNVDIL (679 aa). Positions 46-112 constitute an Importin N-terminal domain; the sequence is AQEVLTHLKE…KKYVVGLIIK (67 aa). HEAT repeat units lie at residues 217–240, 241–277, 354–472, 515–553, 560–597, and 602–639; these read QNAP…PLGY, IFET…VSVS, MLLV…YVDT, RFLV…QYPR, KFLK…KCRR, and VQVG…AVGY. The interval 327-450 is interaction with Ran and nuclear export complex formation; sequence CTFLKEHDQL…VREFMKDTDS (124 aa). A Phosphoserine modification is found at serine 391. The interval 411 to 414 is necessary for HTLV-1 Rex multimerization; sequence PMLF. An interaction with RANBP3 region spans residues 411–481; sequence PMLFKVRLLM…TERIMTEKLH (71 aa). Lysine 446 carries the N6-acetyllysine modification. Residue threonine 448 is modified to Phosphothreonine. At serine 450 the chain carries Phosphoserine. The residue at position 454 (tyrosine 454) is a Phosphotyrosine. At lysine 693 the chain carries N6-acetyllysine. HEAT repeat units lie at residues 775–813, 885–916, 917–954, and 1002–1039; these read NFVP…KLGG, TMRN…SFYQ, TYFC…NLVE, and FSLN…EERE. Residues 800–820 are interaction with HIV-1 Rev; sequence VLSTMAIIVNKLGGHITAEIP. Serine 1031 is modified (phosphoserine).

Belongs to the exportin family. In terms of assembly, found in a U snRNA export complex with PHAX/RNUXA, NCBP1/CBP80, NCBP2/CBP20, RAN, XPO1 and m7G-capped RNA. Component of a nuclear export receptor complex composed of KPNB1, RAN, SNUPN and XPO1. Found in a trimeric export complex with SNUPN, RAN and XPO1. Found in a nuclear export complex with RANBP3 and RAN. Found in a 60S ribosomal subunit export complex with NMD3, RAN, XPO1. Interacts with DDX3X, NMD3, NUP42, NUP88, NUP214, RANBP3 and TERT. Interacts with NEMF (via its N-terminus). Interacts with the monomeric form of BIRC5/survivin deacetylated at 'Lys-129'. Interacts with DTNBP1 and SERTAD2; the interactions translocate DTNBP1 and SERTAD2 out of the nucleus. Interacts with ATF2. Interacts with SLC35G1 and STIM1. Interacts with DCAF8. Interacts with CPEB3. Interacts with HAX1. Interacts with BOK; translocates to the cytoplasm. Interacts with HSP90AB1. Interacts with LRPPRC; interacts with LRPPRC alone and also when LRPPRC is in complex with EIF4E and with EIF4E sensitivity element (4ESE)-containing mRNAs to form an EIF4E-dependent mRNA export complex. As to quaternary structure, (Microbial infection) Interacts with HIV-1 Rev. (Microbial infection) Interacts with HTLV-1 Rex. In terms of assembly, (Microbial infection) Interacts with influenza A nucleoprotein. As to quaternary structure, (Microbial infection) Interacts with Epstein-Barr virus protein BMLF1. (Microbial infection) Part of a tetrameric complex composed of CRM1, importin alpha/beta dimer and the Venezuelan equine encephalitis virus (VEEV) capsid; this complex blocks the receptor-mediated transport through the nuclear pore. In terms of assembly, (Microbial infection) Interacts with SARS-CoV virus protein ORF9b; this interaction mediates protein ORF9b export out of the nucleus. In terms of tissue distribution, expressed in heart, brain, placenta, lung, liver, skeletal muscle, pancreas, spleen, thymus, prostate, testis, ovary, small intestine, colon and peripheral blood leukocytes. Not expressed in the kidney.

It is found in the cytoplasm. Its subcellular location is the nucleus. The protein localises to the nucleoplasm. The protein resides in the cajal body. It localises to the nucleolus. In terms of biological role, mediates the nuclear export of cellular proteins (cargos) bearing a leucine-rich nuclear export signal (NES) and of RNAs. In the nucleus, in association with RANBP3, binds cooperatively to the NES on its target protein and to the GTPase RAN in its active GTP-bound form (Ran-GTP). Docking of this complex to the nuclear pore complex (NPC) is mediated through binding to nucleoporins. Upon transit of a nuclear export complex into the cytoplasm, disassembling of the complex and hydrolysis of Ran-GTP to Ran-GDP (induced by RANBP1 and RANGAP1, respectively) cause release of the cargo from the export receptor. The directionality of nuclear export is thought to be conferred by an asymmetric distribution of the GTP- and GDP-bound forms of Ran between the cytoplasm and nucleus. Involved in U3 snoRNA transport from Cajal bodies to nucleoli. Binds to late precursor U3 snoRNA bearing a TMG cap. (Microbial infection) Mediates the export of unspliced or incompletely spliced RNAs out of the nucleus from different viruses including HIV-1, HTLV-1 and influenza A. Interacts with, and mediates the nuclear export of HIV-1 Rev and HTLV-1 Rex proteins. Involved in HTLV-1 Rex multimerization. The chain is Exportin-1 (XPO1) from Homo sapiens (Human).